We begin with the raw amino-acid sequence, 147 residues long: HTH-type transcriptional regulator MntR (147 aa).

Positions 1–63 (MPTPSMEDYI…YEKYRGFVLT (63 aa)) constitute an HTH dtxR-type domain. Mn(2+)-binding residues include aspartate 8, glutamate 11, histidine 77, glutamate 99, glutamate 102, and histidine 103.

Belongs to the DtxR/MntR family. Homodimer.

It is found in the cytoplasm. DNA binding is strongly activated by Mn(2+). Functionally, central regulator of manganese homeostasis. The chain is HTH-type transcriptional regulator MntR from Oceanobacillus iheyensis (strain DSM 14371 / CIP 107618 / JCM 11309 / KCTC 3954 / HTE831).